Here is a 168-residue protein sequence, read N- to C-terminus: MTQIAIYPGTFDPFTNGHLDVFERASNIFDSVVVVIAENSRKNTLFSVDERREMIEKIIGRYPGARVEVLHDGLLADYARQVGAKAIVRGVRQVKDFEYEFQMSLLNRQLNPDVTTVFLMPNVKYTYVASSIIREVAMLGGDVHNFVHPNVLEKLHEKYNVCKGQSNT.

A substrate-binding site is contributed by T10. Residues 10–11 (TF) and H18 contribute to the ATP site. Substrate contacts are provided by K42, L75, and R89. ATP is bound by residues 90–92 (GVR), E100, and 125–131 (YTYVASS).

It belongs to the bacterial CoaD family. In terms of assembly, homohexamer. Mg(2+) is required as a cofactor.

It localises to the cytoplasm. It carries out the reaction (R)-4'-phosphopantetheine + ATP + H(+) = 3'-dephospho-CoA + diphosphate. It participates in cofactor biosynthesis; coenzyme A biosynthesis; CoA from (R)-pantothenate: step 4/5. Functionally, reversibly transfers an adenylyl group from ATP to 4'-phosphopantetheine, yielding dephospho-CoA (dPCoA) and pyrophosphate. The protein is Phosphopantetheine adenylyltransferase of Prosthecochloris aestuarii (strain DSM 271 / SK 413).